The chain runs to 274 residues: 2,3,4,5-tetrahydropyridine-2,6-dicarboxylate N-succinyltransferase (274 aa).

R104 and D141 together coordinate substrate.

Belongs to the transferase hexapeptide repeat family. As to quaternary structure, homotrimer.

It is found in the cytoplasm. It catalyses the reaction (S)-2,3,4,5-tetrahydrodipicolinate + succinyl-CoA + H2O = (S)-2-succinylamino-6-oxoheptanedioate + CoA. It functions in the pathway amino-acid biosynthesis; L-lysine biosynthesis via DAP pathway; LL-2,6-diaminopimelate from (S)-tetrahydrodipicolinate (succinylase route): step 1/3. The protein is 2,3,4,5-tetrahydropyridine-2,6-dicarboxylate N-succinyltransferase of Wigglesworthia glossinidia brevipalpis.